The sequence spans 101 residues: Small ribosomal subunit protein uS14 (101 aa).

The protein belongs to the universal ribosomal protein uS14 family. Part of the 30S ribosomal subunit. Contacts proteins S3 and S10.

In terms of biological role, binds 16S rRNA, required for the assembly of 30S particles and may also be responsible for determining the conformation of the 16S rRNA at the A site. In Sphingopyxis alaskensis (strain DSM 13593 / LMG 18877 / RB2256) (Sphingomonas alaskensis), this protein is Small ribosomal subunit protein uS14.